The sequence spans 314 residues: MTEHNEDPQIERVADDAADEEAVTEPLATESKDEPAEHPEFEGPRRRARRERAERRAAQARATAIEQARRAAKRRARGQIVSEQNPAKPAARGVVRGLKALLATVVLAVVGIGLGLALYFTPAMSAREIVIIGIGAVSREEVLDAARVRPATPLLQIDTQQVADRVATIRRVASARVQRQYPSALRITIVERVPVVVKDFSDGPHLFDRDGVDFATDPPPPALPYFDVDNPGPSDPTTKAALQVLTALHPEVASQVGRIAAPSVASITLTLADGRVVIWGTTDRCEEKAEKLAALLTQPGRTYDVSSPDLPTVK.

Basic and acidic residues-rich tracts occupy residues 1 to 15 (MTEH…RVAD) and 30 to 57 (ESKD…ERRA). Positions 1–57 (MTEHNEDPQIERVADDAADEEAVTEPLATESKDEPAEHPEFEGPRRRARRERAERRA) are disordered. Residues 1–99 (MTEHNEDPQI…AARGVVRGLK (99 aa)) lie on the Cytoplasmic side of the membrane. A helical membrane pass occupies residues 100–120 (ALLATVVLAVVGIGLGLALYF). At 121–314 (TPAMSAREIV…VSSPDLPTVK (194 aa)) the chain is on the extracellular side. The region spanning 124–192 (MSAREIVIIG…SALRITIVER (69 aa)) is the POTRA domain.

It belongs to the FtsQ/DivIB family. FtsQ subfamily.

The protein resides in the cell membrane. Functionally, essential cell division protein. This is Cell division protein FtsQ from Mycobacterium bovis (strain ATCC BAA-935 / AF2122/97).